Consider the following 231-residue polypeptide: CLAVATA3/ESR (CLE)-related protein 4B-1 (231 aa).

The first 21 residues, 1–21 (MATNTMLCLLILSVVLALAFA), serve as a signal peptide directing secretion. The required for secretion from the host cytoplasm to the host apoplasm stretch occupies residues 21-83 (ATNKKGDEEP…SNLLPNNNWM (63 aa)). Residue N32 is glycosylated (N-linked (GlcNAc...) asparagine). Residues 116-231 (RKTGMHSQRH…APAGPDPIHH (116 aa)) are disordered. Basic and acidic residues-rich tracts occupy residues 125 to 137 (HHEE…EKRV) and 144 to 221 (PIHH…EKRG). One copy of the A-1 repeat lies at 127 to 135 (EETTLEQEK). The interval 127-219 (EETTLEQEKR…HEETTFEQEK (93 aa)) is 5 X approximate repeat A. The CLE-1 repeat unit spans residues 136–147 (RVAGAGPDPIHH). The segment at 136–231 (RVAGAGPDPI…APAGPDPIHH (96 aa)) is 5 X approximate repeat CLE. One copy of the A-2 repeat lies at 148 to 156 (QDTTLEQEK). Residues 157–168 (RAVPAGPDPKHH) form a CLE-2 repeat. The A-3 repeat unit spans residues 169-177 (EETTLEQEK). Residues 178–189 (RAVPAGPDPKHH) form a CLE-3 repeat. The A-4 repeat unit spans residues 190–198 (EETTLEQEK). A CLE-4 repeat occupies 199–210 (RAVPAGPDPKHH). An A-5 repeat occupies 211–219 (EETTFEQEK). The CLE-5 repeat unit spans residues 220–231 (RGAPAGPDPIHH).

The protein belongs to the CLV3/ESR signal peptide family. Highly expressed exclusively within the dorsal esophageal gland cell during syncytium formation in host plants.

The protein resides in the secreted. Its subcellular location is the host cytoplasm. It localises to the host extracellular space. It is found in the extracellular space. The protein localises to the apoplast. Functionally, mimics host plant CLE extracellular signal peptides that regulate cell fate. May play a role in the differentiation or division of feeding cells (syncytia) induced in plant roots during infection. The protein is CLAVATA3/ESR (CLE)-related protein 4B-1 (CLE-4B-1) of Globodera rostochiensis (Golden nematode worm).